A 505-amino-acid polypeptide reads, in one-letter code: ATP synthase subunit alpha (505 aa).

Residue 172–179 (GDRQIGKT) participates in ATP binding.

The protein belongs to the ATPase alpha/beta chains family. F-type ATPases have 2 components, CF(1) - the catalytic core - and CF(0) - the membrane proton channel. CF(1) has five subunits: alpha(3), beta(3), gamma(1), delta(1), epsilon(1). CF(0) has three main subunits: a(1), b(2) and c(9-12). The alpha and beta chains form an alternating ring which encloses part of the gamma chain. CF(1) is attached to CF(0) by a central stalk formed by the gamma and epsilon chains, while a peripheral stalk is formed by the delta and b chains.

It localises to the cell inner membrane. The catalysed reaction is ATP + H2O + 4 H(+)(in) = ADP + phosphate + 5 H(+)(out). Produces ATP from ADP in the presence of a proton gradient across the membrane. The alpha chain is a regulatory subunit. This is ATP synthase subunit alpha from Syntrophobacter fumaroxidans (strain DSM 10017 / MPOB).